We begin with the raw amino-acid sequence, 128 residues long: Fluoride-specific ion channel FluC (128 aa).

Helical transmembrane passes span 4 to 24 (LLLALIVGLGGFLGASLRYLI), 39 to 59 (GTLIANILGALLIGFIMEFSM), 71 to 91 (FLTTGIMGGLTTFSTFSYETI), and 99 to 119 (MTLGIENIILNLGCSLLFVVI). The Na(+) site is built by Gly78 and Thr81.

It belongs to the fluoride channel Fluc/FEX (TC 1.A.43) family.

The protein resides in the cell membrane. It carries out the reaction fluoride(in) = fluoride(out). Na(+) is not transported, but it plays an essential structural role and its presence is essential for fluoride channel function. In terms of biological role, fluoride-specific ion channel. Important for reducing fluoride concentration in the cell, thus reducing its toxicity. In Clostridium perfringens (strain 13 / Type A), this protein is Fluoride-specific ion channel FluC.